A 251-amino-acid polypeptide reads, in one-letter code: Imidazole glycerol phosphate synthase subunit HisF (251 aa).

Residues Asp11 and Asp130 contribute to the active site.

The protein belongs to the HisA/HisF family. In terms of assembly, heterodimer of HisH and HisF.

The protein resides in the cytoplasm. The enzyme catalyses 5-[(5-phospho-1-deoxy-D-ribulos-1-ylimino)methylamino]-1-(5-phospho-beta-D-ribosyl)imidazole-4-carboxamide + L-glutamine = D-erythro-1-(imidazol-4-yl)glycerol 3-phosphate + 5-amino-1-(5-phospho-beta-D-ribosyl)imidazole-4-carboxamide + L-glutamate + H(+). It participates in amino-acid biosynthesis; L-histidine biosynthesis; L-histidine from 5-phospho-alpha-D-ribose 1-diphosphate: step 5/9. Functionally, IGPS catalyzes the conversion of PRFAR and glutamine to IGP, AICAR and glutamate. The HisF subunit catalyzes the cyclization activity that produces IGP and AICAR from PRFAR using the ammonia provided by the HisH subunit. The protein is Imidazole glycerol phosphate synthase subunit HisF of Chlorobium phaeobacteroides (strain BS1).